The primary structure comprises 413 residues: Putative glutamate--cysteine ligase 2 (413 aa).

The tract at residues 392–413 is disordered; the sequence is GGVCALSTPQGDPLPGWAERLH.

This sequence belongs to the glutamate--cysteine ligase type 2 family. YbdK subfamily.

The catalysed reaction is L-cysteine + L-glutamate + ATP = gamma-L-glutamyl-L-cysteine + ADP + phosphate + H(+). In terms of biological role, ATP-dependent carboxylate-amine ligase which exhibits weak glutamate--cysteine ligase activity. The sequence is that of Putative glutamate--cysteine ligase 2 from Bordetella bronchiseptica (strain ATCC BAA-588 / NCTC 13252 / RB50) (Alcaligenes bronchisepticus).